The sequence spans 429 residues: DNA dC-&gt;dU-editing enzyme APOBEC3 (429 aa).

2 CMP/dCMP-type deaminase domains span residues 38-154 (DRKD…AQVA) and 238-357 (EEEF…LCSL). Histidine 71 contributes to the Zn(2+) binding site. Catalysis depends on glutamate 73, which acts as the Proton donor. Zn(2+) contacts are provided by cysteine 105, cysteine 108, histidine 288, cysteine 316, and cysteine 319.

Belongs to the cytidine and deoxycytidylate deaminase family. Homodimer. Requires Zn(2+) as cofactor.

The protein resides in the cytoplasm. The enzyme catalyses a 2'-deoxycytidine in single-stranded DNA + H2O + H(+) = a 2'-deoxyuridine in single-stranded DNA + NH4(+). Its function is as follows. DNA deaminase (cytidine deaminase) which acts as an inhibitor of retrovirus replication and retrotransposon mobility via deaminase-dependent and -independent mechanisms. Selectively targets single-stranded DNA and does not deaminate double-stranded DNA or single- or double-stranded RNA. This Rattus norvegicus (Rat) protein is DNA dC-&gt;dU-editing enzyme APOBEC3 (Apobec3).